The following is a 95-amino-acid chain: MSVTKKDVAYIAELARLKFGDTEMETMTVELNNILHYIDKLNEVDTEGVQPLSSIHDESNVLRADIEKTSISTDQVLLNAPDRQDRFFKVPKVIG.

The protein belongs to the GatC family. Heterotrimer of A, B and C subunits.

The catalysed reaction is L-glutamyl-tRNA(Gln) + L-glutamine + ATP + H2O = L-glutaminyl-tRNA(Gln) + L-glutamate + ADP + phosphate + H(+). It carries out the reaction L-aspartyl-tRNA(Asn) + L-glutamine + ATP + H2O = L-asparaginyl-tRNA(Asn) + L-glutamate + ADP + phosphate + 2 H(+). Functionally, allows the formation of correctly charged Asn-tRNA(Asn) or Gln-tRNA(Gln) through the transamidation of misacylated Asp-tRNA(Asn) or Glu-tRNA(Gln) in organisms which lack either or both of asparaginyl-tRNA or glutaminyl-tRNA synthetases. The reaction takes place in the presence of glutamine and ATP through an activated phospho-Asp-tRNA(Asn) or phospho-Glu-tRNA(Gln). The chain is Aspartyl/glutamyl-tRNA(Asn/Gln) amidotransferase subunit C from Chlorobium phaeobacteroides (strain DSM 266 / SMG 266 / 2430).